A 116-amino-acid chain; its full sequence is MNVLKCLAIISVLGIFFIPRYSESAISCSVVLQDLQPCVSYLTSGSGNPPETCCDGVKSLAAATTTSADKKAACQCIKSVANSVTVKPELAQALASNCGASLPVDASPTVDCTTVG.

Residues 1 to 24 (MNVLKCLAIISVLGIFFIPRYSES) form the signal peptide. 4 disulfides stabilise this stretch: Cys-28–Cys-76, Cys-38–Cys-53, Cys-54–Cys-98, and Cys-74–Cys-112.

Belongs to the plant LTP family.

Its function is as follows. Plant non-specific lipid-transfer proteins transfer phospholipids as well as galactolipids across membranes. May play a role in wax or cutin deposition in the cell walls of expanding epidermal cells and certain secretory tissues. This chain is Non-specific lipid-transfer protein 8 (LTP8), found in Arabidopsis thaliana (Mouse-ear cress).